We begin with the raw amino-acid sequence, 509 residues long: Probable aspartic-type endopeptidase CTSD (509 aa).

A signal peptide spans 1–21 (MQFLWLCLLSAVTLQFTGTLA). The 307-residue stretch at 102–408 (YFSEVKVGSE…DFDKNRVGLA (307 aa)) folds into the Peptidase A1 domain. Aspartate 120 is a catalytic residue. Asparagine 174 is a glycosylation site (N-linked (GlcNAc...) asparagine). Aspartate 302 is an active-site residue. Residue asparagine 361 is glycosylated (N-linked (GlcNAc...) asparagine). Positions 451–489 (NKAPSGGSPGLPAESGSDSTTNGEATNGATSSPNSSSSV) are disordered. A compositionally biased stretch (polar residues) spans 466–480 (GSDSTTNGEATNGAT). N-linked (GlcNAc...) asparagine glycosylation is present at asparagine 484. The GPI-anchor amidated serine moiety is linked to residue serine 485. Residues 486 to 509 (SSSVLTPTWLTLAVFFAIGSSLWS) constitute a propeptide, removed in mature form.

Belongs to the peptidase A1 family.

Its subcellular location is the cell membrane. In terms of biological role, probable GPI-anchored aspartic-type endopeptidase which contributes to virulence. This Arthroderma benhamiae (strain ATCC MYA-4681 / CBS 112371) (Trichophyton mentagrophytes) protein is Probable aspartic-type endopeptidase CTSD (CTSD).